Here is a 231-residue protein sequence, read N- to C-terminus: Large ribosomal subunit protein uL1 (231 aa).

The protein belongs to the universal ribosomal protein uL1 family. In terms of assembly, part of the 50S ribosomal subunit.

Binds directly to 23S rRNA. The L1 stalk is quite mobile in the ribosome, and is involved in E site tRNA release. Its function is as follows. Protein L1 is also a translational repressor protein, it controls the translation of the L11 operon by binding to its mRNA. This is Large ribosomal subunit protein uL1 from Ectopseudomonas mendocina (strain ymp) (Pseudomonas mendocina).